Consider the following 207-residue polypeptide: Large ribosomal subunit protein bL20 (207 aa).

A disordered region spans residues Gln117 to Lys161. Residues Ser140–Glu149 are compositionally biased toward basic and acidic residues.

Belongs to the bacterial ribosomal protein bL20 family.

In terms of biological role, binds directly to 23S ribosomal RNA and is necessary for the in vitro assembly process of the 50S ribosomal subunit. It is not involved in the protein synthesizing functions of that subunit. This is Large ribosomal subunit protein bL20 from Onion yellows phytoplasma (strain OY-M).